The primary structure comprises 941 residues: Peroxisomal ATPase PEX6 (941 aa).

Residues 384–391 and 698–705 each bind ATP; these read GIPGCGKR and GPPGTGKT.

This sequence belongs to the AAA ATPase family. As to quaternary structure, interacts with PEX1; forming the PEX1-PEX6 AAA ATPase complex, which is composed of a heterohexamer formed by a trimer of PEX1-PEX6 dimers. Interacts with APME9.

The protein localises to the cytoplasm. Its subcellular location is the cytosol. It is found in the peroxisome membrane. The catalysed reaction is ATP + H2O = ADP + phosphate + H(+). Component of the PEX1-PEX6 AAA ATPase complex, a protein dislocase complex that mediates the ATP-dependent extraction of the PEX5 receptor from peroxisomal membranes, an essential step for PEX5 recycling. Specifically recognizes PEX5 monoubiquitinated at 'Cys-11', and pulls it out of the peroxisome lumen through the PEX2-PEX10-PEX12 retrotranslocation channel. Extraction by the PEX1-PEX6 AAA ATPase complex is accompanied by unfolding of the TPR repeats and release of bound cargo from PEX5. Required for jasmonate biosynthesis. Necessary for the developmental elimination of obsolete peroxisome matix proteins. The sequence is that of Peroxisomal ATPase PEX6 from Arabidopsis thaliana (Mouse-ear cress).